The chain runs to 299 residues: Probable lipid kinase YegS-like (299 aa).

One can recognise a DAGKc domain in the interval 2 to 133 (ATFPASLLIL…IDIAQVNDKT (132 aa)). ATP contacts are provided by residues Thr40, 66-72 (GDGTINE), and Thr95. Mg(2+)-binding residues include Leu215, Asp218, and Leu220. The active-site Proton acceptor is the Glu271.

The protein belongs to the diacylglycerol/lipid kinase family. YegS lipid kinase subfamily. The cofactor is Mg(2+). Ca(2+) is required as a cofactor.

It is found in the cytoplasm. In terms of biological role, probably phosphorylates lipids; the in vivo substrate is unknown. This Citrobacter koseri (strain ATCC BAA-895 / CDC 4225-83 / SGSC4696) protein is Probable lipid kinase YegS-like.